Here is a 361-residue protein sequence, read N- to C-terminus: Phospho-N-acetylmuramoyl-pentapeptide-transferase (361 aa).

10 helical membrane-spanning segments follow: residues 28-48 (LAII…IKFL), 74-94 (TMGG…LADL), 99-119 (IWIT…DDYA), 133-153 (SKLV…EYLD), 168-188 (LNLD…VGSS), 203-223 (VPIA…GNLI), 236-256 (TGEL…FLWF), 263-283 (VFMG…ISVI), 288-308 (IVLA…ILQV), and 338-358 (KVVI…LSSL).

Belongs to the glycosyltransferase 4 family. MraY subfamily. Mg(2+) serves as cofactor.

It localises to the cell inner membrane. It catalyses the reaction UDP-N-acetyl-alpha-D-muramoyl-L-alanyl-gamma-D-glutamyl-meso-2,6-diaminopimeloyl-D-alanyl-D-alanine + di-trans,octa-cis-undecaprenyl phosphate = di-trans,octa-cis-undecaprenyl diphospho-N-acetyl-alpha-D-muramoyl-L-alanyl-D-glutamyl-meso-2,6-diaminopimeloyl-D-alanyl-D-alanine + UMP. It functions in the pathway cell wall biogenesis; peptidoglycan biosynthesis. Catalyzes the initial step of the lipid cycle reactions in the biosynthesis of the cell wall peptidoglycan: transfers peptidoglycan precursor phospho-MurNAc-pentapeptide from UDP-MurNAc-pentapeptide onto the lipid carrier undecaprenyl phosphate, yielding undecaprenyl-pyrophosphoryl-MurNAc-pentapeptide, known as lipid I. The protein is Phospho-N-acetylmuramoyl-pentapeptide-transferase of Rickettsia akari (strain Hartford).